Consider the following 226-residue polypeptide: Prolactin (226 aa).

An N-terminal signal peptide occupies residues 1–29 (MNSQGSDRKAVTLLLLVMSNLLFCQNAHP). Cysteines 33 and 38 form a disulfide. A phosphoserine mark is found at S53 and S117. Intrachain disulfides connect C85/C201 and C218/C226.

The protein belongs to the somatotropin/prolactin family. Interacts with PRLR.

Its subcellular location is the secreted. Its function is as follows. Prolactin acts primarily on the mammary gland by promoting lactation. This chain is Prolactin (PRL), found in Mesocricetus auratus (Golden hamster).